A 132-amino-acid chain; its full sequence is Transthyretin-like protein 16 (132 aa).

Residues 1–19 (MRSLVVCLLLAACALECTA) form the signal peptide. Residue Asn23 is glycosylated (N-linked (GlcNAc...) asparagine).

This sequence belongs to the nematode transthyretin-like family.

It localises to the secreted. In Caenorhabditis elegans, this protein is Transthyretin-like protein 16 (ttr-16).